Reading from the N-terminus, the 85-residue chain is Large ribosomal subunit protein bL27 (85 aa).

Belongs to the bacterial ribosomal protein bL27 family.

In Vesicomyosocius okutanii subsp. Calyptogena okutanii (strain HA), this protein is Large ribosomal subunit protein bL27.